A 336-amino-acid polypeptide reads, in one-letter code: MIEADRLVSADSSGFEEAADRAIRPKLLAEYVGQPQVRSQMEIFIQAAKLRGDALDHLLIFGPPGLGKTTLANIVANEMGVNLRTTSGPVLEKAGDLAAMLTNLEPHDVLFIDEIHRLSPVVEEVLYPAMEDYQLDIMIGEGPAARSIKIDLPPFTLIGATTRAGSLTSPLRDRFGIVQRLEFYQIPDLQHIVSRSARHMGLEMSDEGALEVARRSRGTPRIANRLLRRVRDFAEVRHDGTISADIAAQALDMLNVDAEGFDYMDRKLLLAVIDKFFGGPVGLDNLAAAIGEERETIEDVLEPYLIQQGFLQRTPRGRMATVRAWNHFGITPPEMP.

A large ATPase domain (RuvB-L) region spans residues 4-184 (ADRLVSADSS…FGIVQRLEFY (181 aa)). ATP contacts are provided by residues I23, R24, G65, K68, T69, T70, 131-133 (EDY), R174, Y184, and R221. Residue T69 coordinates Mg(2+). Residues 185-255 (QIPDLQHIVS…IAAQALDMLN (71 aa)) form a small ATPAse domain (RuvB-S) region. The interval 258 to 336 (AEGFDYMDRK…HFGITPPEMP (79 aa)) is head domain (RuvB-H). Residues R294, R313, and R318 each contribute to the DNA site.

Belongs to the RuvB family. As to quaternary structure, homohexamer. Forms an RuvA(8)-RuvB(12)-Holliday junction (HJ) complex. HJ DNA is sandwiched between 2 RuvA tetramers; dsDNA enters through RuvA and exits via RuvB. An RuvB hexamer assembles on each DNA strand where it exits the tetramer. Each RuvB hexamer is contacted by two RuvA subunits (via domain III) on 2 adjacent RuvB subunits; this complex drives branch migration. In the full resolvosome a probable DNA-RuvA(4)-RuvB(12)-RuvC(2) complex forms which resolves the HJ.

The protein localises to the cytoplasm. The enzyme catalyses ATP + H2O = ADP + phosphate + H(+). Functionally, the RuvA-RuvB-RuvC complex processes Holliday junction (HJ) DNA during genetic recombination and DNA repair, while the RuvA-RuvB complex plays an important role in the rescue of blocked DNA replication forks via replication fork reversal (RFR). RuvA specifically binds to HJ cruciform DNA, conferring on it an open structure. The RuvB hexamer acts as an ATP-dependent pump, pulling dsDNA into and through the RuvAB complex. RuvB forms 2 homohexamers on either side of HJ DNA bound by 1 or 2 RuvA tetramers; 4 subunits per hexamer contact DNA at a time. Coordinated motions by a converter formed by DNA-disengaged RuvB subunits stimulates ATP hydrolysis and nucleotide exchange. Immobilization of the converter enables RuvB to convert the ATP-contained energy into a lever motion, pulling 2 nucleotides of DNA out of the RuvA tetramer per ATP hydrolyzed, thus driving DNA branch migration. The RuvB motors rotate together with the DNA substrate, which together with the progressing nucleotide cycle form the mechanistic basis for DNA recombination by continuous HJ branch migration. Branch migration allows RuvC to scan DNA until it finds its consensus sequence, where it cleaves and resolves cruciform DNA. In Klebsiella pneumoniae subsp. pneumoniae (strain ATCC 700721 / MGH 78578), this protein is Holliday junction branch migration complex subunit RuvB.